Here is a 412-residue protein sequence, read N- to C-terminus: Sterol-4-alpha-carboxylate 3-dehydrogenase erg26, decarboxylating (412 aa).

Residues 17–23, 89–90, and 111–113 contribute to the NADP(+) site; these read GGCGFLG, DI, and TAT. Residues serine 158 and tyrosine 188 each coordinate substrate. Residues tyrosine 188, lysine 192, and 217-220 each bind NADP(+); that span reads PAGI. The active-site Proton donor is lysine 192.

This sequence belongs to the 3-beta-HSD family. Heterotetramer of erg25, erg26, erg27 and erg28. Erg28 acts as a scaffold to tether erg27 and other 4,4-demethylation-related enzymes, forming a demethylation enzyme complex, in the endoplasmic reticulum.

The protein resides in the endoplasmic reticulum membrane. It functions in the pathway steroid metabolism; ergosterol biosynthesis. In terms of biological role, sterol-C4-methyl oxidase; part of the third module of ergosterol biosynthesis pathway that includes the late steps of the pathway. Erg26 is a catalytic component of the C-4 demethylation complex that catalyzes the conversion of 4,4-dimethylfecosterol into fecosterol via 4-methylfecosterol. The third module or late pathway involves the ergosterol synthesis itself through consecutive reactions that mainly occur in the endoplasmic reticulum (ER) membrane. Firstly, the squalene synthase erg9 catalyzes the condensation of 2 farnesyl pyrophosphate moieties to form squalene, which is the precursor of all steroids. Squalene synthase is crucial for balancing the incorporation of farnesyl diphosphate (FPP) into sterol and nonsterol isoprene synthesis. Secondly, squalene is converted into lanosterol by the consecutive action of the squalene epoxidase erg1 and the lanosterol synthase erg7. Then, the delta(24)-sterol C-methyltransferase erg6 methylates lanosterol at C-24 to produce eburicol. Eburicol is the substrate of the sterol 14-alpha demethylase encoded by cyp51A and cyp51B, to yield 4,4,24-trimethyl ergosta-8,14,24(28)-trienol. The C-14 reductase erg24 then reduces the C14=C15 double bond which leads to 4,4-dimethylfecosterol. A sequence of further demethylations at C-4, involving the C-4 demethylation complex containing the C-4 methylsterol oxidases erg25A or erg25B, the sterol-4-alpha-carboxylate 3-dehydrogenase erg26 and the 3-keto-steroid reductase erg27, leads to the production of fecosterol via 4-methylfecosterol. The C-8 sterol isomerase erg2 then catalyzes the reaction which results in unsaturation at C-7 in the B ring of sterols and thus converts fecosterol to episterol. The sterol-C5-desaturase erg3B then catalyzes the introduction of a C-5 double bond in the B ring to produce 5-dehydroepisterol. The 2 other sterol-C5-desaturases, erg3A and erg3C, seem to be less important in ergosterol biosynthesis. The C-22 sterol desaturase erg5 further converts 5-dehydroepisterol into ergosta-5,7,22,24(28)-tetraen-3beta-ol by forming the C-22(23) double bond in the sterol side chain. Finally, ergosta-5,7,22,24(28)-tetraen-3beta-ol is substrate of the C-24(28) sterol reductases erg4A and erg4B to produce ergosterol. Possible alternative sterol biosynthetic pathways might exist from fecosterol to ergosterol, depending on the activities of the erg3 isoforms. The polypeptide is Sterol-4-alpha-carboxylate 3-dehydrogenase erg26, decarboxylating (Aspergillus fumigatus (strain ATCC MYA-4609 / CBS 101355 / FGSC A1100 / Af293) (Neosartorya fumigata)).